The chain runs to 80 residues: Acyl carrier protein (80 aa).

In terms of domain architecture, Carrier spans 4-79; that stretch reads ANVEQKVKNI…DAVNYITTHK (76 aa). Serine 39 bears the O-(pantetheine 4'-phosphoryl)serine mark.

The protein belongs to the acyl carrier protein (ACP) family. Post-translationally, 4'-phosphopantetheine is transferred from CoA to a specific serine of apo-ACP by AcpS. This modification is essential for activity because fatty acids are bound in thioester linkage to the sulfhydryl of the prosthetic group.

Its subcellular location is the cytoplasm. It participates in lipid metabolism; fatty acid biosynthesis. In terms of biological role, carrier of the growing fatty acid chain in fatty acid biosynthesis. This Anaeromyxobacter sp. (strain Fw109-5) protein is Acyl carrier protein.